Here is a 272-residue protein sequence, read N- to C-terminus: Troponin T, fast skeletal muscle (272 aa).

The span at 1-50 shows a compositional bias: acidic residues; the sequence is MSDEETEQVEEQYEEEEEAQEEEVQEEAPEPEEVQEDAVAEEEREEDEEE. Residues 1–75 are disordered; it reads MSDEETEQVE…EKVDFDDIQK (75 aa). S2 is subject to N-acetylserine. S2 is subject to Phosphoserine. The span at 63–75 shows a compositional bias: basic and acidic residues; sequence PEGEKVDFDDIQK. S91 carries the post-translational modification Phosphoserine. Basic and acidic residues predominate over residues 114 to 156; the sequence is RAERAEQQRIRAEKEREPQNRLAEEKARREEEDAKRRAEDDMK. A disordered region spans residues 114–193; the sequence is RAERAEQQRI…TAREMKKKIL (80 aa). A phosphoserine mark is found at S162, S169, and S170. Positions 184 to 193 are enriched in basic and acidic residues; that stretch reads TAREMKKKIL. S206 is subject to Phosphoserine. Y222 carries the phosphotyrosine modification. Positions 248-272 are disordered; sequence RIDQAQKHSKKAGATAKGKVGGRWK.

The protein belongs to the troponin T family. As to expression, expressed predominantly in skeletal muscle.

Functionally, troponin T is the tropomyosin-binding subunit of troponin, the thin filament regulatory complex which confers calcium-sensitivity to striated muscle actomyosin ATPase activity. This chain is Troponin T, fast skeletal muscle (Tnnt3), found in Mus musculus (Mouse).